The chain runs to 105 residues: Immunoglobulin lambda-like polypeptide 1 (105 aa).

The segment at 1 to 105 (QPKSDPLVTL…EKSVSPAECS (105 aa)) is c region. Residues 6–100 (PLVTLFLPSL…EGNTVEKSVS (95 aa)) form the Ig-like C1-type domain. The cysteines at positions 27 and 86 are disulfide-linked.

In terms of assembly, associates non-covalently with VPREB1A. Interacts with SYNV1/HRD1 (via N-terminus); this interaction leads to increased IGLL1 ubiquitination and degradation in pre-B cells, possibly through a lysosomal, not proteasomal, pathway.

It localises to the endoplasmic reticulum. The protein resides in the secreted. Functionally, critical for B-cell development. This Mus spretus (Western Mediterranean mouse) protein is Immunoglobulin lambda-like polypeptide 1 (Igll1).